Here is a 453-residue protein sequence, read N- to C-terminus: MSSSSLPTKSSNALLSVNFNQDHSCIAVGTRDGYSITNCEPFGRVYTNNAGPTSLVEMLFCTSLVALVATSDTDPKSNASPRRLQIVNTKRQSVICELLFPTAILGVKLNRRRLVVVLEQEIYIYDISNMKLLHTIETSPNPMAICALSPSSENCFLAYPSPVASPTSPFSNSGASSSAEANTTAGDVLIFDLLSLSVTNVIQAHKTPISALALNATGTLLATASDKGTVIRVFSIPAAQKLHQFRRGSYAARIYSLNFNAVSTLLAVSSDTETVHIFKLSSGAGAGAKGRSSSNGGESPSLNSFDGSSDSSSPPGSTTNATRGGYEAFMGKHKAAKSNGISGTLRRRSMALGRGITGSVGGYLPNSLTEMWEPSRDFAFLKLPSQGVSSVVALSSTTPHVMVVTSEGYFYSYAIDLEHGGECILMKQYSLIDPDLDTTSTARSDTATPSLAD.

WD repeat units lie at residues 9–49, 204–244, and 249–288; these read KSSN…YTNN, AHKT…KLHQ, and SYAA…GAGA. Residues 245 to 249 carry the L/FRRG motif motif; the sequence is FRRGS. The tract at residues 284-324 is disordered; sequence AGAGAKGRSSSNGGESPSLNSFDGSSDSSSPPGSTTNATRG. Over residues 289 to 320 the composition is skewed to low complexity; sequence KGRSSSNGGESPSLNSFDGSSDSSSPPGSTTN.

This sequence belongs to the WD repeat PROPPIN family. In terms of assembly, component of the PI(3,5)P2 regulatory complex.

It localises to the preautophagosomal structure membrane. The protein localises to the vacuole membrane. The protein resides in the endosome membrane. In terms of biological role, the PI(3,5)P2 regulatory complex regulates both the synthesis and turnover of phosphatidylinositol 3,5-bisphosphate (PtdIns(3,5)P2). Necessary for proper vacuole morphology. Plays an important role in osmotically-induced vacuole fragmentation. Required for cytoplasm to vacuole transport (Cvt) vesicle formation, pexophagy and starvation-induced autophagy. Involved in correct ATG9 trafficking to the pre-autophagosomal structure. Might also be involved in premeiotic DNA replication. The polypeptide is Autophagy-related protein 18 (ATG18) (Mycosarcoma maydis (Corn smut fungus)).